The sequence spans 41 residues: Putative toxic protein TimP (41 aa).

Residues 1-17 (MKIRCFCIVLIVSGALL) are membrane-embedded.

Belongs to the TimP toxin family.

The protein resides in the cell inner membrane. Putative toxic component of a potential type I toxin-antitoxin (TA) system. Neutralized by sRNA antitoxin TimR which binds to the 5' UTR of timP mRNA and inhibits translation. The antitoxin gene is encoded immediately upstream and transcribed divergently from the toxin gene; antitoxin RNA is less stable than timP mRNA. In Escherichia coli (strain K12), this protein is Putative toxic protein TimP.